We begin with the raw amino-acid sequence, 118 residues long: NADH-quinone oxidoreductase subunit A (118 aa).

The next 3 membrane-spanning stretches (helical) occupy residues 5–25 (FAAV…MMLM), 61–81 (FLYA…FPWA), and 90–110 (FAFI…WYAW).

It belongs to the complex I subunit 3 family. In terms of assembly, NDH-1 is composed of 14 different subunits. Subunits NuoA, H, J, K, L, M, N constitute the membrane sector of the complex.

The protein resides in the cell membrane. It catalyses the reaction a quinone + NADH + 5 H(+)(in) = a quinol + NAD(+) + 4 H(+)(out). NDH-1 shuttles electrons from NADH, via FMN and iron-sulfur (Fe-S) centers, to quinones in the respiratory chain. The immediate electron acceptor for the enzyme in this species is believed to be a menaquinone. Couples the redox reaction to proton translocation (for every two electrons transferred, four hydrogen ions are translocated across the cytoplasmic membrane), and thus conserves the redox energy in a proton gradient. The polypeptide is NADH-quinone oxidoreductase subunit A (Desulfitobacterium hafniense (strain Y51)).